The sequence spans 155 residues: Ribosome maturation factor RimP (155 aa).

This sequence belongs to the RimP family.

Its subcellular location is the cytoplasm. Required for maturation of 30S ribosomal subunits. The polypeptide is Ribosome maturation factor RimP (Prochlorococcus marinus (strain MIT 9515)).